Consider the following 298-residue polypeptide: GTP cyclohydrolase FolE2 (298 aa).

The protein belongs to the GTP cyclohydrolase IV family.

The catalysed reaction is GTP + H2O = 7,8-dihydroneopterin 3'-triphosphate + formate + H(+). The protein operates within cofactor biosynthesis; 7,8-dihydroneopterin triphosphate biosynthesis; 7,8-dihydroneopterin triphosphate from GTP: step 1/1. Functionally, converts GTP to 7,8-dihydroneopterin triphosphate. In Pseudomonas fluorescens (strain SBW25), this protein is GTP cyclohydrolase FolE2.